A 973-amino-acid chain; its full sequence is MAAVTLSPCSMCCGSRRLRSVIVIQAQRGNWNRIRLSNFFFSKVWNISYRSKHKYSDNLLEQVEKYASARLENQSKLITKVAALMECDNVDDFIDKKSDEQVKKDLVLACKRFPSIILGDSRPVELYSNSKSYGESSSILKTPTDNSFLPTPMHGGWFDPDNLSRTLSSFCPELLQNDDSSDPREDILDDGSSFTSKTATSEVEATSDDVFAAQRFLATSIDSMPGLSKRHSNQLDSCGFHTMKKLLHHFPRTYADLQNAQVDIEDGQYLIFVGKVLSSKGVRASSSFSFLEVIVSCEVSGRDRTPEDLSHNAEDKAGKSIFLHLKKFFRGTRFTWQPFLNSIQEKHKVGDLVCISGKVKSLRAEDHFEMREYNIDVLKDEEESSHRAQGRPYPIYPSKGGLNPKFLSDVISRALRVLPANMDPIPKEITKVFGLPSLNDAYVGIHEPKTLDEADLARKRLIFDEFFYLQLARLYQMLQSLGTKIEKDVLLEKFRKPVLNSVYIEEWSTLTKSFLKALPYSLTPSQLSAVSEIIWDLKRPVPMNRLLQGDVGCGKTVVAFLACMEVIGSGYQAAFMAPTELLAIQHYEQCRDLLENMEGVSSKPTIGLLTGSTPAKQSRMIRQDLQSGAISFIIGTHSLIAEKIEYSALRIAVVDEQQRFGVIQRGKFNSKLYGTSMISKSGSSDSDDTSKADLSMAPHVLAMSATPIPRSLALALYGDISLTQITGMPLGRIPVETHIFEGNETGIKEVYSMMLEDLKSGGRVYVVYPVIDQSEQLPQLRAASAELEIVTKKFPKYNCGLLHGRMKSDDKEEALNKFRSGETQILLSTQVIEIGVDVPDASMMVVMNAERFGIAQLHQLRGRVGRGTRKSKCLLVGSSTNSLKRLNMLGKSSDGFYLANIDLLLRGPGDLLGKKQSGHLPEFPVARLEIDGNMLQEAHIAALNVLGDSHDLEKFPALKAELSMRQPLCLLGD.

Residues 1–208 (MAAVTLSPCS…ATSEVEATSD (208 aa)) form a sufficient for chloroplastic and mitochondrial trgeting region. The tract at residues 174-200 (LLQNDDSSDPREDILDDGSSFTSKTAT) is disordered. In terms of domain architecture, Helicase ATP-binding spans 536-725 (DLKRPVPMNR…LYGDISLTQI (190 aa)). 549 to 556 (GDVGCGKT) is a binding site for ATP. Residues 655–658 (DEQQ) carry the DEQQ box motif. In terms of domain architecture, Helicase C-terminal spans 746–904 (GIKEVYSMML…GFYLANIDLL (159 aa)).

The protein belongs to the helicase family. RecG subfamily. In terms of tissue distribution, expressed in most tissues, not seen in pollen, ovules or developing seeds.

The protein localises to the plastid. Its subcellular location is the chloroplast. It is found in the mitochondrion. It carries out the reaction Couples ATP hydrolysis with the unwinding of duplex DNA by translocating in the 3'-5' direction.. The catalysed reaction is ATP + H2O = ADP + phosphate + H(+). In terms of biological role, plays a critical role in recombination and DNA repair. Helps process Holliday junction (HJ) intermediates to mature products by catalyzing branch migration. Has replication fork regression activity, unwinds stalled or blocked replication forks to make a HJ that can be resolved. Has a DNA unwinding activity characteristic of a DNA helicase with 3'-5' polarity. Plays a role in recombination surveillance and repair of double-stranded (ds)DNA breaks in the mitochondrion. May be able to dissociate D- and R-loops. Able to complement UV sensitivity of a recG deletion in E.coli. This is ATP-dependent DNA helicase homolog RECG1, chloroplastic/mitochondrial from Arabidopsis thaliana (Mouse-ear cress).